A 140-amino-acid chain; its full sequence is MALAPARTKYRKSQKGSRAGNAKRGNTLAFGEFGLQSLTRGPMTGQQIEAARVTISRHLKRKGKLWIRVFPHKPITKKPAEVRQGQGKGPVEFYIAQIRPGAVLFELAGVPATTAKEAFRLADAKLPFHCRFIAREGAVV.

The disordered stretch occupies residues 1–24 (MALAPARTKYRKSQKGSRAGNAKR).

This sequence belongs to the universal ribosomal protein uL16 family. Part of the 50S ribosomal subunit.

In terms of biological role, binds 23S rRNA and is also seen to make contacts with the A and possibly P site tRNAs. The polypeptide is Large ribosomal subunit protein uL16 (Opitutus terrae (strain DSM 11246 / JCM 15787 / PB90-1)).